The chain runs to 292 residues: Glutamyl-Q tRNA(Asp) synthetase (292 aa).

L-glutamate-binding positions include 9–13 (RFAPS) and Glu45. Positions 12–22 (PSPSGPLHAGS) match the 'HIGH' region motif. Positions 99, 101, 121, and 125 each coordinate Zn(2+). L-glutamate is bound by residues Tyr184 and Arg202. Residues 240-244 (KLSKQ) carry the 'KMSKS' region motif. An ATP-binding site is contributed by Lys243.

The protein belongs to the class-I aminoacyl-tRNA synthetase family. GluQ subfamily. Zn(2+) is required as a cofactor.

In terms of biological role, catalyzes the tRNA-independent activation of glutamate in presence of ATP and the subsequent transfer of glutamate onto a tRNA(Asp). Glutamate is transferred on the 2-amino-5-(4,5-dihydroxy-2-cyclopenten-1-yl) moiety of the queuosine in the wobble position of the QUC anticodon. The polypeptide is Glutamyl-Q tRNA(Asp) synthetase (Verminephrobacter eiseniae (strain EF01-2)).